The sequence spans 667 residues: tRNA 5-methylaminomethyl-2-thiouridine biosynthesis bifunctional protein MnmC (667 aa).

A compositionally biased stretch (polar residues) spans 1-12; that stretch reads MSKQQAPNTTGI. The disordered stretch occupies residues 1 to 20; that stretch reads MSKQQAPNTTGIGTADLQWH. Residues 1-240 are tRNA (mnm(5)s(2)U34)-methyltransferase; the sequence is MSKQQAPNTT…KRECLRGVLE (240 aa). The tract at residues 268–667 is FAD-dependent cmnm(5)s(2)U34 oxidoreductase; sequence IGAGIAGAAC…LVRSLKKPPL (400 aa).

In the N-terminal section; belongs to the methyltransferase superfamily. tRNA (mnm(5)s(2)U34)-methyltransferase family. The protein in the C-terminal section; belongs to the DAO family. The cofactor is FAD.

Its subcellular location is the cytoplasm. The enzyme catalyses 5-aminomethyl-2-thiouridine(34) in tRNA + S-adenosyl-L-methionine = 5-methylaminomethyl-2-thiouridine(34) in tRNA + S-adenosyl-L-homocysteine + H(+). In terms of biological role, catalyzes the last two steps in the biosynthesis of 5-methylaminomethyl-2-thiouridine (mnm(5)s(2)U) at the wobble position (U34) in tRNA. Catalyzes the FAD-dependent demodification of cmnm(5)s(2)U34 to nm(5)s(2)U34, followed by the transfer of a methyl group from S-adenosyl-L-methionine to nm(5)s(2)U34, to form mnm(5)s(2)U34. The chain is tRNA 5-methylaminomethyl-2-thiouridine biosynthesis bifunctional protein MnmC from Magnetococcus marinus (strain ATCC BAA-1437 / JCM 17883 / MC-1).